The primary structure comprises 306 residues: tRNA dimethylallyltransferase (306 aa).

Residue 11–18 (GPTAVGKS) coordinates ATP. 13–18 (TAVGKS) serves as a coordination point for substrate. The interaction with substrate tRNA stretch occupies residues 35 to 38 (DSIQ).

This sequence belongs to the IPP transferase family. Monomer. It depends on Mg(2+) as a cofactor.

It catalyses the reaction adenosine(37) in tRNA + dimethylallyl diphosphate = N(6)-dimethylallyladenosine(37) in tRNA + diphosphate. In terms of biological role, catalyzes the transfer of a dimethylallyl group onto the adenine at position 37 in tRNAs that read codons beginning with uridine, leading to the formation of N6-(dimethylallyl)adenosine (i(6)A). The chain is tRNA dimethylallyltransferase from Borreliella burgdorferi (strain ATCC 35210 / DSM 4680 / CIP 102532 / B31) (Borrelia burgdorferi).